A 429-amino-acid polypeptide reads, in one-letter code: UPF0597 protein AHA_1619 (429 aa).

This sequence belongs to the UPF0597 family.

The protein is UPF0597 protein AHA_1619 of Aeromonas hydrophila subsp. hydrophila (strain ATCC 7966 / DSM 30187 / BCRC 13018 / CCUG 14551 / JCM 1027 / KCTC 2358 / NCIMB 9240 / NCTC 8049).